The chain runs to 429 residues: Enolase (429 aa).

(2R)-2-phosphoglycerate is bound at residue glutamine 164. Glutamate 206 acts as the Proton donor in catalysis. 3 residues coordinate Mg(2+): aspartate 243, glutamate 286, and aspartate 313. (2R)-2-phosphoglycerate-binding residues include lysine 338, arginine 367, serine 368, and lysine 389. Catalysis depends on lysine 338, which acts as the Proton acceptor.

Belongs to the enolase family. It depends on Mg(2+) as a cofactor.

The protein localises to the cytoplasm. It localises to the secreted. Its subcellular location is the cell surface. The enzyme catalyses (2R)-2-phosphoglycerate = phosphoenolpyruvate + H2O. It functions in the pathway carbohydrate degradation; glycolysis; pyruvate from D-glyceraldehyde 3-phosphate: step 4/5. Its function is as follows. Catalyzes the reversible conversion of 2-phosphoglycerate (2-PG) into phosphoenolpyruvate (PEP). It is essential for the degradation of carbohydrates via glycolysis. The protein is Enolase of Thermotoga sp. (strain RQ2).